The sequence spans 198 residues: Ribonuclease HII (198 aa).

The RNase H type-2 domain maps to 10–198; sequence QLVAGVDEVG…PVKRALGLAS (189 aa). Asp16, Glu17, and Asp108 together coordinate a divalent metal cation.

The protein belongs to the RNase HII family. The cofactor is Mn(2+). Mg(2+) is required as a cofactor.

Its subcellular location is the cytoplasm. The catalysed reaction is Endonucleolytic cleavage to 5'-phosphomonoester.. In terms of biological role, endonuclease that specifically degrades the RNA of RNA-DNA hybrids. The protein is Ribonuclease HII of Escherichia coli O45:K1 (strain S88 / ExPEC).